The sequence spans 161 residues: Peroxynitrite isomerase 2 (161 aa).

The short motif at 17–23 (GTWAGQG) is the GXWXGXG element. His-152 lines the heme b pocket.

The protein belongs to the nitrobindin family. In terms of assembly, homodimer. Heme b serves as cofactor.

It carries out the reaction peroxynitrite = nitrate. It participates in nitrogen metabolism. Heme-binding protein able to scavenge peroxynitrite and to protect free L-tyrosine against peroxynitrite-mediated nitration, by acting as a peroxynitrite isomerase that converts peroxynitrite to nitrate. Therefore, this protein likely plays a role in peroxynitrite sensing and in the detoxification of reactive nitrogen and oxygen species (RNS and ROS, respectively). Is able to bind nitric oxide (NO) in vitro, but may act as a sensor of peroxynitrite levels in vivo. The polypeptide is Peroxynitrite isomerase 2 (Mycobacterium marinum (strain ATCC BAA-535 / M)).